A 360-amino-acid polypeptide reads, in one-letter code: DNA replication and repair protein RecF (360 aa).

ATP is bound at residue 33 to 40 (GENGSGKT).

The protein belongs to the RecF family.

It localises to the cytoplasm. The RecF protein is involved in DNA metabolism; it is required for DNA replication and normal SOS inducibility. RecF binds preferentially to single-stranded, linear DNA. It also seems to bind ATP. The protein is DNA replication and repair protein RecF of Rickettsia rickettsii (strain Iowa).